Consider the following 238-residue polypeptide: Cysteine-rich venom protein pseudechetoxin-like (238 aa).

The signal sequence occupies residues 1–19 (MIAFIVLLSLAAVLQQSSG). The propeptide occupies 20–28 (TVDFASESS). Positions 38-164 (VDKHNALRRS…STKYLYVCQY (127 aa)) constitute an SCP domain. 8 disulfide bridges follow: C75-C153, C92-C165, C148-C162, C184-C191, C187-C196, C200-C233, C209-C227, and C218-C231. One can recognise a ShKT domain in the interval 200–233 (CKHEDDFSNCKALAKNSKCQTAWIKSKCPATCFC).

Belongs to the CRISP family. Expressed by the venom gland.

It localises to the secreted. Blocks olfactory (CNGA2) and retinal (CNGA1) CNG channel currents. Does not affect neither depolarization- nor caffeine-induced contraction of smooth muscle. The protein is Cysteine-rich venom protein pseudechetoxin-like of Hoplocephalus stephensii (Stephens's banded snake).